Consider the following 275-residue polypeptide: Bis(5'-nucleosyl)-tetraphosphatase, symmetrical (275 aa).

The protein belongs to the Ap4A hydrolase family.

The catalysed reaction is P(1),P(4)-bis(5'-adenosyl) tetraphosphate + H2O = 2 ADP + 2 H(+). Its function is as follows. Hydrolyzes diadenosine 5',5'''-P1,P4-tetraphosphate to yield ADP. The polypeptide is Bis(5'-nucleosyl)-tetraphosphatase, symmetrical (Actinobacillus succinogenes (strain ATCC 55618 / DSM 22257 / CCUG 43843 / 130Z)).